Consider the following 60-residue polypeptide: U20-myrmicitoxin-Mri1a (60 aa).

Positions 1–24 (MKSVILLFAVIAIIVAVIIPAING) are cleaved as a signal peptide. The propeptide occupies 25–34 (ESSSNPSANA).

The protein belongs to the formicidae venom precursor-01 superfamily. In terms of tissue distribution, expressed by the venom gland.

Its subcellular location is the secreted. In terms of biological role, induces paralysis 5 minutes after injection into blowflies (L.caesar), and then death within 24 hours. May have antimicrobial properties, like most ant linear peptides. The sequence is that of U20-myrmicitoxin-Mri1a from Manica rubida (European giant red ant).